The chain runs to 816 residues: Transducer protein Htr18 (816 aa).

Transmembrane regions (helical) follow at residues 21-41 and 282-302; these read VVIV…TQAV and NIVV…LVIG. Residues 303–356 form the HAMP 1 domain; the sequence is RDALTALTDMSDRAEAIAAGDIDTAIEETTRIDEVGDLRRSFRDIQEYLQTVAG. Residues 399–425 form a disordered region; that stretch reads DAQETAEQSRKEAEQSREEAEALAAAL. Basic and acidic residues predominate over residues 405 to 418; sequence EQSRKEAEQSREEA. Residues 423–476 enclose the HAMP 2 domain; the sequence is AALESQAQDIRETVEHAADGDLTQRLETDTDHESMAAIATALNSLLEELEGTIH. The Methyl-accepting transducer domain occupies 495–731; that stretch reads SAEEVKRASG…EVVTMVDEVG (237 aa). The interval 790–816 is disordered; that stretch reads GGAENTTGAFVRSASTDHSRDATHHDT. The segment covering 793 to 803 has biased composition (polar residues); sequence ENTTGAFVRSA. Basic and acidic residues predominate over residues 804–816; the sequence is STDHSRDATHHDT.

The protein belongs to the methyl-accepting chemotaxis (MCP) protein family. Post-translationally, methylated by CheR.

The protein localises to the cell membrane. Its function is as follows. Potentially involved in chemo- or phototactic signal transduction. The chain is Transducer protein Htr18 (htr18) from Halobacterium salinarum (strain ATCC 29341 / DSM 671 / R1).